Reading from the N-terminus, the 359-residue chain is Chorismate synthase (359 aa).

Arginine 47 lines the NADP(+) pocket. FMN contacts are provided by residues 123 to 125, glycine 283, 298 to 302, and arginine 326; these read RSS and KPTSS.

Belongs to the chorismate synthase family. In terms of assembly, homotetramer. It depends on FMNH2 as a cofactor.

The enzyme catalyses 5-O-(1-carboxyvinyl)-3-phosphoshikimate = chorismate + phosphate. It participates in metabolic intermediate biosynthesis; chorismate biosynthesis; chorismate from D-erythrose 4-phosphate and phosphoenolpyruvate: step 7/7. Functionally, catalyzes the anti-1,4-elimination of the C-3 phosphate and the C-6 proR hydrogen from 5-enolpyruvylshikimate-3-phosphate (EPSP) to yield chorismate, which is the branch point compound that serves as the starting substrate for the three terminal pathways of aromatic amino acid biosynthesis. This reaction introduces a second double bond into the aromatic ring system. This Chlamydia pneumoniae (Chlamydophila pneumoniae) protein is Chorismate synthase.